A 161-amino-acid chain; its full sequence is Small ribosomal subunit protein uS9 (161 aa).

Belongs to the universal ribosomal protein uS9 family.

The sequence is that of Small ribosomal subunit protein uS9 (rpsI) from Rickettsia prowazekii (strain Madrid E).